The primary structure comprises 420 residues: uncharacterized protein (420 aa).

The VWFA domain maps to 43-215 (NLCLVLDHSG…HTFRQLFQRM (173 aa)). The segment at 389-420 (LQSGEDLSEGDRKKTRMVSKTTLQPPSAPSEH) is disordered.

This is an uncharacterized protein from Synechocystis sp. (strain ATCC 27184 / PCC 6803 / Kazusa).